Reading from the N-terminus, the 28-residue chain is Phospholipase A2 3 (28 aa).

The protein belongs to the phospholipase A2 family. Group I subfamily. Requires Ca(2+) as cofactor. As to expression, expressed by the venom gland.

Its subcellular location is the secreted. The enzyme catalyses a 1,2-diacyl-sn-glycero-3-phosphocholine + H2O = a 1-acyl-sn-glycero-3-phosphocholine + a fatty acid + H(+). Snake venom phospholipase A2 (PLA2) that inhibits neuromuscular transmission by blocking acetylcholine release from the nerve termini. PLA2 catalyzes the calcium-dependent hydrolysis of the 2-acyl groups in 3-sn-phosphoglycerides. In Micrurus nigrocinctus (Central American coral snake), this protein is Phospholipase A2 3.